Here is a 1158-residue protein sequence, read N- to C-terminus: ATP-dependent helicase/deoxyribonuclease subunit B (1158 aa).

Positions 1-275 constitute a UvrD-like helicase ATP-binding domain; that stretch reads MTLHAYLGRA…QYFNQLYRFN (275 aa). 8 to 15 contacts ATP; the sequence is GRAGTGKS. Residues 269–583 enclose the UvrD-like helicase C-terminal domain; sequence NQLYRFNNQD…SIGTMDLAKV (315 aa). Residues cysteine 784, cysteine 1112, cysteine 1115, and cysteine 1121 each contribute to the [4Fe-4S] cluster site.

It belongs to the helicase family. AddB/RexB type 1 subfamily. As to quaternary structure, heterodimer of AddA and AddB. The cofactor is Mg(2+). [4Fe-4S] cluster is required as a cofactor.

In terms of biological role, the heterodimer acts as both an ATP-dependent DNA helicase and an ATP-dependent, dual-direction single-stranded exonuclease. Recognizes the chi site generating a DNA molecule suitable for the initiation of homologous recombination. The AddB subunit has 5' -&gt; 3' nuclease activity but not helicase activity. The protein is ATP-dependent helicase/deoxyribonuclease subunit B of Staphylococcus aureus (strain MW2).